Consider the following 115-residue polypeptide: uncharacterized protein (115 aa).

Topologically, residues 1–11 (MKLTKEKKNDC) are cytoplasmic. The helical transmembrane segment at 12–32 (LVGVSYIPPLNFFTLTFLFLL) threads the bilayer. Over 33–52 (RIEKVHLSLSLSLSLSLRFY) the chain is Extracellular. The chain crosses the membrane as a helical span at residues 53–73 (YFHNVCYPSLFLFFCFVIPFF). The Cytoplasmic portion of the chain corresponds to 74 to 78 (YSVRF). The helical transmembrane segment at 79-98 (ILLYLHILRSFYELNILLLY) threads the bilayer. The Extracellular segment spans residues 99-115 (GAENSRRQSPPGYYVIR).

Its subcellular location is the membrane. This is an uncharacterized protein from Saccharomyces cerevisiae (strain ATCC 204508 / S288c) (Baker's yeast).